A 211-amino-acid chain; its full sequence is Probable nicotinate-nucleotide adenylyltransferase (211 aa).

Belongs to the NadD family.

It carries out the reaction nicotinate beta-D-ribonucleotide + ATP + H(+) = deamido-NAD(+) + diphosphate. It participates in cofactor biosynthesis; NAD(+) biosynthesis; deamido-NAD(+) from nicotinate D-ribonucleotide: step 1/1. Catalyzes the reversible adenylation of nicotinate mononucleotide (NaMN) to nicotinic acid adenine dinucleotide (NaAD). This Corynebacterium kroppenstedtii (strain DSM 44385 / JCM 11950 / CIP 105744 / CCUG 35717) protein is Probable nicotinate-nucleotide adenylyltransferase.